The chain runs to 1435 residues: Probable ATP-dependent DNA helicase HFM1 (1435 aa).

The Helicase ATP-binding domain maps to 290–478 (DDLLYTDRNF…WLSDGERPAV (189 aa)). 303–310 (APTGSGKT) contributes to the ATP binding site. A DEAH box motif is present at residues 411-414 (DEVH). Positions 519-720 (SVIQMYSDQK…DVNIAVEWIR (202 aa)) constitute a Helicase C-terminal domain. The region spanning 777-1092 (PTEAGRLMAW…GLDIQQKLTV (316 aa)) is the SEC63 domain. The segment at 1109–1139 (KSETQISHSKHSDISTIAGPNKGTTASKKPG) is disordered. The segment at 1143-1158 (CNHLCKSKHTCGHDCC) adopts a C4-type zinc-finger fold. The disordered stretch occupies residues 1295-1315 (GFGNTLSSSTRGSKLPLQESK). Polar residues predominate over residues 1296–1306 (FGNTLSSSTRG).

Belongs to the helicase family. SKI2 subfamily. Zn(2+) serves as cofactor. Preferentially expressed in testis and ovary.

The catalysed reaction is Couples ATP hydrolysis with the unwinding of duplex DNA by translocating in the 3'-5' direction.. It carries out the reaction ATP + H2O = ADP + phosphate + H(+). Required for crossover formation and complete synapsis of homologous chromosomes during meiosis. This chain is Probable ATP-dependent DNA helicase HFM1 (HFM1), found in Homo sapiens (Human).